Here is a 417-residue protein sequence, read N- to C-terminus: Serpin A3-7 (417 aa).

Positions 1 to 25 (MRTERTSFLLALGLLVSGFCSRVHC) are cleaved as a signal peptide. Residues Asn103, Asn183, Asn221, and Asn267 are each glycosylated (N-linked (GlcNAc...) asparagine).

This sequence belongs to the serpin family. In terms of assembly, homodimer.

The protein resides in the cytoplasmic vesicle. It localises to the secretory vesicle. The protein localises to the chromaffin granule. Its subcellular location is the secreted. Serine protease inhibitor. The polypeptide is Serpin A3-7 (Bos taurus (Bovine)).